The primary structure comprises 207 residues: LexA repressor (207 aa).

The H-T-H motif DNA-binding region spans V28 to S48. Active-site for autocatalytic cleavage activity residues include S130 and K168.

This sequence belongs to the peptidase S24 family. In terms of assembly, homodimer.

It catalyses the reaction Hydrolysis of Ala-|-Gly bond in repressor LexA.. In terms of biological role, represses a number of genes involved in the response to DNA damage (SOS response), including recA and lexA. In the presence of single-stranded DNA, RecA interacts with LexA causing an autocatalytic cleavage which disrupts the DNA-binding part of LexA, leading to derepression of the SOS regulon and eventually DNA repair. The chain is LexA repressor from Staphylococcus haemolyticus (strain JCSC1435).